The primary structure comprises 1003 residues: Glutamate receptor ionotropic, NMDA 3B (1003 aa).

The first 24 residues, 1 to 24 (MECVQTLWLSLALALARGSWVVRG), serve as a signal peptide directing secretion. The Extracellular segment spans residues 25–574 (HPQPCGVPTR…PIGAFMWPLH (550 aa)). N-linked (GlcNAc...) asparagine glycans are attached at residues Asn69, Asn212, Asn344, Asn451, and Asn465. Intrachain disulfides connect Cys439–Cys475 and Cys445–Cys476. Ser531, Ser533, and Arg538 together coordinate glycine. Ser533 and Arg538 together coordinate D-serine. A helical transmembrane segment spans residues 575–594 (WSMWVGVFAALHLTALFLTL). The Cytoplasmic segment spans residues 595-615 (YEWRSPYGLTPRGRNRGTVFS). An intramembrane region (discontinuously helical) is located at residues 616–627 (YSSALNLCYAIL). Topologically, residues 628–641 (FGRTVSSKTPKCPT) are cytoplasmic. A helical transmembrane segment spans residues 642–661 (GRFLMNLWAIFCLLVLSSYT). Residues 662–832 (ANLAAVMVGD…TLQMGVYHLS (171 aa)) are Extracellular-facing. Ser701 provides a ligand contact to glycine. D-serine contacts are provided by Ser701, Ala702, and Asp745. Glycine is bound at residue Asp745. Residue Asn786 is glycosylated (N-linked (GlcNAc...) asparagine). Residues 833 to 848 (GLFVLLCLGLGSALLT) form a helical membrane-spanning segment. Residues 849–1003 (SLGEHVFYRL…RLLHAAPAES (155 aa)) are Cytoplasmic-facing. Residues 883 to 912 (LNTGPPEGQQERAEQECSGPKEEQPAADGA) form a disordered region. Residues 891–906 (QQERAEQECSGPKEEQ) show a composition bias toward basic and acidic residues. Positions 947 to 986 (SNGPGVQAELRELELRIEAARERLRSALLRRGELRAQLGD) form a coiled coil. Residues 952–985 (VQAELRELELRIEAARERLRSALLRRGELRAQLG) are involved in the trafficking and surface expression of NMDARs.

This sequence belongs to the glutamate-gated ion channel (TC 1.A.10.1) family. NR3B/GRIN3B subfamily. As to quaternary structure, forms heterotetrameric channels that contain at least two GluN1 subunits and at least a combination of one GluN2 and one GluN3 subunits (in vitro). Forms heterotetrameric channels composed of two GluN1/zeta subunits (GRIN1), and two identical GluN3 subunits (GRIN3A or GRIN3B) (in vitro). Does not form functional homomeric channels. In terms of tissue distribution, expressed in the facial nucleus and the ambiguus nucleus of the brainstem, pons, medulla, spinal cord and cerebellum.

The protein localises to the cell membrane. The protein resides in the postsynaptic cell membrane. The catalysed reaction is Ca(2+)(in) = Ca(2+)(out). It catalyses the reaction Na(+)(in) = Na(+)(out). Its function is as follows. Component of a non-conventional N-methyl-D-aspartate (NMDA) receptors (NMDARs) that function as heterotetrameric, ligand-gated cation channels with low calcium permeability and low voltage-dependent block by Mg(2+). Forms glutamatergic receptor complexes with GluN1 and GluN2 subunits which are activated by glycine binding to the GluN1 and GluN3 subunits and L-glutamate binding to GluN2 subunits. Forms excitatory glycinergic receptor complexes with GluN1 alone which are activated by glycine binding to the GluN1 and GluN3 subunits. GluN3B subunit also binds D-serine and, in the absence of glycine, activates glycinergic receptor complexes, but with lower efficacy than glycine. Each GluN3 subunit confers differential attributes to channel properties, including activation, deactivation and desensitization kinetics, pH sensitivity, Ca2(+) permeability, and binding to allosteric modulators. The sequence is that of Glutamate receptor ionotropic, NMDA 3B from Mus musculus (Mouse).